Here is a 271-residue protein sequence, read N- to C-terminus: Hematopoietically-expressed homeobox protein Hhex (271 aa).

An interaction with SOX13 region spans residues 1 to 138 (MQFPHPGPAA…PFLQRPLHKR (138 aa)). Residue serine 54 is modified to Phosphoserine. Residues 138–197 (RKGGQVRFSNDQTVELEKKFETQKYLSPPERKRLAKMLQLSERQVKTWFQNRRAKWRRLK) constitute a DNA-binding region (homeobox). The interval 138-271 (RKGGQVRFSN…EGDKGYFNAG (134 aa)) is required for WNT signaling induction. The segment at 195–271 (RLKQENPQSN…EGDKGYFNAG (77 aa)) is disordered. Residues 212–242 (LDTSCEQGQDLPSEQNKGASLDRSQCSPSPA) are compositionally biased toward polar residues. Acidic residues predominate over residues 245–261 (EDPDSEISEDSDQEVDI).

In terms of assembly, interacts with CD81; the interaction prevents nuclear translocation of HHEX. Interacts (via N-terminus) with SOX13; abolishes the SOX13-mediated inhibition of WNT-mediated transcriptional activity via competitive inhibition of the SOX13-TCF7 complex. Interacts with EIF4E; the interaction inhibits EIF4E-mediated mRNA nuclear export.

It is found in the nucleus. The protein resides in the nuclear body. The protein localises to the cytoplasm. Its function is as follows. Recognizes the DNA sequence 5'-ATTAA-3'. Transcriptional repressor. Activator of WNT-mediated transcription in conjunction with CTNNB1. Establishes anterior identity at two levels; acts early to enhance canonical WNT-signaling by repressing expression of TLE4, and acts later to inhibit NODAL-signaling by directly targeting NODAL. Inhibits EIF4E-mediated mRNA nuclear export. May play a role in hematopoietic differentiation. The polypeptide is Hematopoietically-expressed homeobox protein Hhex (Hhex) (Mus musculus (Mouse)).